A 292-amino-acid polypeptide reads, in one-letter code: Elongation factor Ts (292 aa).

Residues 80 to 83 are involved in Mg(2+) ion dislocation from EF-Tu; that stretch reads TDFV.

It belongs to the EF-Ts family.

The protein resides in the cytoplasm. Functionally, associates with the EF-Tu.GDP complex and induces the exchange of GDP to GTP. It remains bound to the aminoacyl-tRNA.EF-Tu.GTP complex up to the GTP hydrolysis stage on the ribosome. This is Elongation factor Ts from Limosilactobacillus fermentum (strain NBRC 3956 / LMG 18251) (Lactobacillus fermentum).